A 175-amino-acid chain; its full sequence is Crossover junction endodeoxyribonuclease RuvC (175 aa).

Residues aspartate 16, glutamate 76, and aspartate 148 contribute to the active site. Residues aspartate 16, glutamate 76, and aspartate 148 each coordinate Mg(2+).

It belongs to the RuvC family. In terms of assembly, homodimer which binds Holliday junction (HJ) DNA. The HJ becomes 2-fold symmetrical on binding to RuvC with unstacked arms; it has a different conformation from HJ DNA in complex with RuvA. In the full resolvosome a probable DNA-RuvA(4)-RuvB(12)-RuvC(2) complex forms which resolves the HJ. Requires Mg(2+) as cofactor.

Its subcellular location is the cytoplasm. The enzyme catalyses Endonucleolytic cleavage at a junction such as a reciprocal single-stranded crossover between two homologous DNA duplexes (Holliday junction).. Its function is as follows. The RuvA-RuvB-RuvC complex processes Holliday junction (HJ) DNA during genetic recombination and DNA repair. Endonuclease that resolves HJ intermediates. Cleaves cruciform DNA by making single-stranded nicks across the HJ at symmetrical positions within the homologous arms, yielding a 5'-phosphate and a 3'-hydroxyl group; requires a central core of homology in the junction. The consensus cleavage sequence is 5'-(A/T)TT(C/G)-3'. Cleavage occurs on the 3'-side of the TT dinucleotide at the point of strand exchange. HJ branch migration catalyzed by RuvA-RuvB allows RuvC to scan DNA until it finds its consensus sequence, where it cleaves and resolves the cruciform DNA. In Bradyrhizobium diazoefficiens (strain JCM 10833 / BCRC 13528 / IAM 13628 / NBRC 14792 / USDA 110), this protein is Crossover junction endodeoxyribonuclease RuvC.